Reading from the N-terminus, the 152-residue chain is Protein FERTILITY RESTORER RF2, mitochondrial (152 aa).

Residues 1–52 (MSTLVTCSLPGAVTTHASTRRFGGSQFQTSQASCISFKREVSAKAVLRSVRC) constitute a mitochondrion transit peptide. A compositionally biased stretch (polar residues) spans 52–69 (CNATQTQSAQRKSSTATV). The interval 52-101 (CNATQTQSAQRKSSTATVKRSDPKGKTQGPKLDDGSGGFPPFRFGKGGGG) is disordered.

It is found in the mitochondrion. Functionally, non-functional allele of the RF2 fertility restorer of rice varieties with LD-type cytoplasmic male sterility (CMS). Non-functional RF2 alleles are found in japonica cultivars Taichung 65 and Nipponbare (AC F1SZ44), and is due to the presence of Thr-78 which replaces Ile-78 in the functional allele. Functional allele is found in the japonica cultivars Fukuyama and Owarihatamochi (AC F1SZ42), and indica cultivar Kasalath (AC F1SZ41). This chain is Protein FERTILITY RESTORER RF2, mitochondrial, found in Oryza sativa subsp. japonica (Rice).